We begin with the raw amino-acid sequence, 166 residues long: Phosphopantetheine adenylyltransferase (166 aa).

Position 10 (Thr10) interacts with substrate. Residues 10-11 (TF) and His18 each bind ATP. Residues Lys42, Leu74, and Arg88 each contribute to the substrate site. ATP contacts are provided by residues 89–91 (GLR), Glu99, and 124–130 (NSFISSS).

This sequence belongs to the bacterial CoaD family. In terms of assembly, homohexamer. The cofactor is Mg(2+).

The protein localises to the cytoplasm. It catalyses the reaction (R)-4'-phosphopantetheine + ATP + H(+) = 3'-dephospho-CoA + diphosphate. It functions in the pathway cofactor biosynthesis; coenzyme A biosynthesis; CoA from (R)-pantothenate: step 4/5. Its function is as follows. Reversibly transfers an adenylyl group from ATP to 4'-phosphopantetheine, yielding dephospho-CoA (dPCoA) and pyrophosphate. The protein is Phosphopantetheine adenylyltransferase of Idiomarina loihiensis (strain ATCC BAA-735 / DSM 15497 / L2-TR).